A 307-amino-acid chain; its full sequence is Membrane protein insertase YidC 2 (307 aa).

Positions 1–23 (MKLTLNRILFSGLALSILLTLTG) are cleaved as a signal peptide. The N-palmitoyl cysteine moiety is linked to residue C24. C24 carries S-diacylglycerol cysteine lipidation. Transmembrane regions (helical) follow at residues 58-78 (LGYGLAIIIVTIIVRTLILPL), 135-155 (LGGIGCLPLLIQMPFFSAMYF), 179-199 (VLTAIIAALYFFQSWLSMMAV), 209-225 (TMMYTMPIMMIFMSFSL), and 231-251 (LYWLVGGFFSIIQQLITTYLL). The interval 263–307 (YAKNPPKAYQSTSSRKDVTPSQNMEQANLPKKIKSNRNAGKQRKR) is disordered. Residues 271-288 (YQSTSSRKDVTPSQNMEQ) show a composition bias toward polar residues. A compositionally biased stretch (basic residues) spans 293–307 (KKIKSNRNAGKQRKR).

This sequence belongs to the OXA1/ALB3/YidC family. Type 2 subfamily.

The protein localises to the cell membrane. Required for the insertion and/or proper folding and/or complex formation of integral membrane proteins into the membrane. Involved in integration of membrane proteins that insert both dependently and independently of the Sec translocase complex, as well as at least some lipoproteins. This chain is Membrane protein insertase YidC 2, found in Streptococcus pyogenes serotype M1.